A 103-amino-acid chain; its full sequence is Large ribosomal subunit protein bL21 (103 aa).

The protein belongs to the bacterial ribosomal protein bL21 family. As to quaternary structure, part of the 50S ribosomal subunit. Contacts protein L20.

This protein binds to 23S rRNA in the presence of protein L20. This is Large ribosomal subunit protein bL21 from Cupriavidus pinatubonensis (strain JMP 134 / LMG 1197) (Cupriavidus necator (strain JMP 134)).